Reading from the N-terminus, the 312-residue chain is Testis-expressed protein 13B (312 aa).

It belongs to the TEX13 family. As to expression, testis specific.

The sequence is that of Testis-expressed protein 13B (TEX13B) from Homo sapiens (Human).